The following is a 103-amino-acid chain: Small ribosomal subunit protein uS10 (103 aa).

It belongs to the universal ribosomal protein uS10 family. In terms of assembly, part of the 30S ribosomal subunit.

Its function is as follows. Involved in the binding of tRNA to the ribosomes. This chain is Small ribosomal subunit protein uS10, found in Pseudoalteromonas atlantica (strain T6c / ATCC BAA-1087).